The sequence spans 238 residues: Ubiquinone/menaquinone biosynthesis C-methyltransferase UbiE (238 aa).

S-adenosyl-L-methionine-binding residues include Thr-62 and Asp-82.

It belongs to the class I-like SAM-binding methyltransferase superfamily. MenG/UbiE family.

It carries out the reaction a 2-demethylmenaquinol + S-adenosyl-L-methionine = a menaquinol + S-adenosyl-L-homocysteine + H(+). The catalysed reaction is a 2-methoxy-6-(all-trans-polyprenyl)benzene-1,4-diol + S-adenosyl-L-methionine = a 5-methoxy-2-methyl-3-(all-trans-polyprenyl)benzene-1,4-diol + S-adenosyl-L-homocysteine + H(+). It functions in the pathway quinol/quinone metabolism; menaquinone biosynthesis; menaquinol from 1,4-dihydroxy-2-naphthoate: step 2/2. It participates in cofactor biosynthesis; ubiquinone biosynthesis. Methyltransferase required for the conversion of demethylmenaquinol (DMKH2) to menaquinol (MKH2) and the conversion of 2-polyprenyl-6-methoxy-1,4-benzoquinol (DDMQH2) to 2-polyprenyl-3-methyl-6-methoxy-1,4-benzoquinol (DMQH2). The protein is Ubiquinone/menaquinone biosynthesis C-methyltransferase UbiE of Wolbachia pipientis wMel.